The chain runs to 297 residues: Trans-enoyl reductase TOXD (297 aa).

NADP(+) contacts are provided by residues 162–165 and Y203; that span reads STAT.

Belongs to the zinc-containing alcohol dehydrogenase family. In terms of assembly, monomer.

Trans-enoyl reductase; part of the diffuse TOX2 gene cluster that mediates the biosynthesis of the HC-toxin, cyclic tetrapeptide of structure cyclo(D-Pro-L-Ala-D-Ala-L-Aeo), where Aeo stands for 2-amino-9,10-epoxi-8-oxodecanoic acid. HC-toxin is a determinant of specificity and virulence in the interaction between the producing fungus and its host, maize. TOXD does not seem to play a role in HC-toxin biosynthesis. This Cochliobolus carbonum (Maize leaf spot fungus) protein is Trans-enoyl reductase TOXD.